The primary structure comprises 113 residues: Nucleoid-associated protein sync_0026 (113 aa).

Belongs to the YbaB/EbfC family. In terms of assembly, homodimer.

Its subcellular location is the cytoplasm. It localises to the nucleoid. Binds to DNA and alters its conformation. May be involved in regulation of gene expression, nucleoid organization and DNA protection. The sequence is that of Nucleoid-associated protein sync_0026 from Synechococcus sp. (strain CC9311).